A 151-amino-acid polypeptide reads, in one-letter code: Ribosome maturation factor RimP (151 aa).

This sequence belongs to the RimP family.

It localises to the cytoplasm. Required for maturation of 30S ribosomal subunits. In Hydrogenovibrio crunogenus (strain DSM 25203 / XCL-2) (Thiomicrospira crunogena), this protein is Ribosome maturation factor RimP.